A 353-amino-acid polypeptide reads, in one-letter code: Survival factor 2 (353 aa).

It belongs to the SVF1 family.

The protein localises to the cytoplasm. The protein resides in the nucleus. The sequence is that of Survival factor 2 (svf2) from Schizosaccharomyces pombe (strain 972 / ATCC 24843) (Fission yeast).